Here is a 333-residue protein sequence, read N- to C-terminus: Phosphate acyltransferase (333 aa).

This sequence belongs to the PlsX family. Homodimer. Probably interacts with PlsY.

It localises to the cytoplasm. It carries out the reaction a fatty acyl-[ACP] + phosphate = an acyl phosphate + holo-[ACP]. The protein operates within lipid metabolism; phospholipid metabolism. Its function is as follows. Catalyzes the reversible formation of acyl-phosphate (acyl-PO(4)) from acyl-[acyl-carrier-protein] (acyl-ACP). This enzyme utilizes acyl-ACP as fatty acyl donor, but not acyl-CoA. The sequence is that of Phosphate acyltransferase from Bacillus subtilis (strain 168).